The following is a 110-amino-acid chain: Coiled-coil-helix-coiled-coil-helix domain-containing protein 5 (110 aa).

The residue at position 1 (M1) is an N-acetylmethionine. CHCH domains are found at residues 9–52 and 55–97; these read ARYC…PIIR and RQAC…QPPS. 4 consecutive short sequence motifs (cx9C motif) follow at residues 12 to 22, 34 to 44, 58 to 68, and 79 to 89; these read CSRELDQYGQC, CHHLKMSIARC, CAEPFEAFEKC, and CAEHMRRFLQC. 4 disulfide bridges follow: C12–C44, C22–C34, C58–C89, and C68–C79.

Monomer.

The protein localises to the mitochondrion intermembrane space. This chain is Coiled-coil-helix-coiled-coil-helix domain-containing protein 5 (Chchd5), found in Mus musculus (Mouse).